The chain runs to 188 residues: Elongation factor P (188 aa).

Belongs to the elongation factor P family.

It is found in the cytoplasm. Its pathway is protein biosynthesis; polypeptide chain elongation. Its function is as follows. Involved in peptide bond synthesis. Stimulates efficient translation and peptide-bond synthesis on native or reconstituted 70S ribosomes in vitro. Probably functions indirectly by altering the affinity of the ribosome for aminoacyl-tRNA, thus increasing their reactivity as acceptors for peptidyl transferase. This chain is Elongation factor P (efp), found in Rickettsia prowazekii (strain Madrid E).